We begin with the raw amino-acid sequence, 143 residues long: Large ribosomal subunit protein uL13 (143 aa).

It belongs to the universal ribosomal protein uL13 family. In terms of assembly, part of the 50S ribosomal subunit.

Functionally, this protein is one of the early assembly proteins of the 50S ribosomal subunit, although it is not seen to bind rRNA by itself. It is important during the early stages of 50S assembly. This is Large ribosomal subunit protein uL13 from Carboxydothermus hydrogenoformans (strain ATCC BAA-161 / DSM 6008 / Z-2901).